The chain runs to 369 residues: Probable trehalose-phosphate phosphatase D (369 aa).

The tract at residues 63–85 is disordered; it reads RASSPTRTRPGNISPLPESDEED.

This sequence belongs to the trehalose phosphatase family. A divalent metal cation serves as cofactor.

The catalysed reaction is alpha,alpha-trehalose 6-phosphate + H2O = alpha,alpha-trehalose + phosphate. The protein operates within glycan biosynthesis; trehalose biosynthesis. Its function is as follows. Removes the phosphate from trehalose 6-phosphate to produce free trehalose. Trehalose accumulation in plant may improve abiotic stress tolerance. This Arabidopsis thaliana (Mouse-ear cress) protein is Probable trehalose-phosphate phosphatase D (TPPD).